Here is a 368-residue protein sequence, read N- to C-terminus: Serine/threonine-protein kinase CAK1 (368 aa).

Residues methionine 1–proline 368 enclose the Protein kinase domain. Aspartate 156 (proton acceptor) is an active-site residue.

This sequence belongs to the protein kinase superfamily. CMGC Ser/Thr protein kinase family. CDC2/CDKX subfamily.

The enzyme catalyses L-seryl-[protein] + ATP = O-phospho-L-seryl-[protein] + ADP + H(+). It carries out the reaction L-threonyl-[protein] + ATP = O-phospho-L-threonyl-[protein] + ADP + H(+). The protein is Serine/threonine-protein kinase CAK1 (CAK1) of Saccharomyces cerevisiae (strain ATCC 204508 / S288c) (Baker's yeast).